The chain runs to 376 residues: Deoxyguanosinetriphosphate triphosphohydrolase-like protein (376 aa).

Positions 62-198 (RLTHSLEVSA…AALADDISYI (137 aa)) constitute an HD domain.

This sequence belongs to the dGTPase family. Type 2 subfamily.

This chain is Deoxyguanosinetriphosphate triphosphohydrolase-like protein, found in Rickettsia canadensis (strain McKiel).